Here is a 355-residue protein sequence, read N- to C-terminus: UDP-N-acetylglucosamine--N-acetylmuramyl-(pentapeptide) pyrophosphoryl-undecaprenol N-acetylglucosamine transferase (355 aa).

UDP-N-acetyl-alpha-D-glucosamine-binding positions include 15–17, asparagine 127, arginine 163, serine 191, isoleucine 244, 263–268, and glutamine 288; these read TGG and ALTVSE.

This sequence belongs to the glycosyltransferase 28 family. MurG subfamily.

Its subcellular location is the cell inner membrane. It catalyses the reaction di-trans,octa-cis-undecaprenyl diphospho-N-acetyl-alpha-D-muramoyl-L-alanyl-D-glutamyl-meso-2,6-diaminopimeloyl-D-alanyl-D-alanine + UDP-N-acetyl-alpha-D-glucosamine = di-trans,octa-cis-undecaprenyl diphospho-[N-acetyl-alpha-D-glucosaminyl-(1-&gt;4)]-N-acetyl-alpha-D-muramoyl-L-alanyl-D-glutamyl-meso-2,6-diaminopimeloyl-D-alanyl-D-alanine + UDP + H(+). The protein operates within cell wall biogenesis; peptidoglycan biosynthesis. Functionally, cell wall formation. Catalyzes the transfer of a GlcNAc subunit on undecaprenyl-pyrophosphoryl-MurNAc-pentapeptide (lipid intermediate I) to form undecaprenyl-pyrophosphoryl-MurNAc-(pentapeptide)GlcNAc (lipid intermediate II). The protein is UDP-N-acetylglucosamine--N-acetylmuramyl-(pentapeptide) pyrophosphoryl-undecaprenol N-acetylglucosamine transferase of Shigella boydii serotype 18 (strain CDC 3083-94 / BS512).